The chain runs to 299 residues: Probable lipid kinase YegS (299 aa).

Residues 2–133 (AEFPASLLIL…IDMAQVNKQT (132 aa)) form the DAGKc domain. ATP is bound by residues T40, 66–72 (GDGTINE), and T95. Mg(2+) is bound by residues L215, D218, and L220. The active-site Proton acceptor is E271.

The protein belongs to the diacylglycerol/lipid kinase family. YegS lipid kinase subfamily. Mg(2+) is required as a cofactor. It depends on Ca(2+) as a cofactor.

Its subcellular location is the cytoplasm. In terms of biological role, probably phosphorylates lipids; the in vivo substrate is unknown. This is Probable lipid kinase YegS from Escherichia coli O6:K15:H31 (strain 536 / UPEC).